The following is a 238-amino-acid chain: Ribosomal RNA small subunit methyltransferase G (238 aa).

S-adenosyl-L-methionine contacts are provided by residues glycine 99, leucine 104, 122–124 (DAT), 150–151 (VE), and arginine 164.

The protein belongs to the methyltransferase superfamily. RNA methyltransferase RsmG family.

The protein localises to the cytoplasm. Its function is as follows. Specifically methylates the N7 position of a guanine in 16S rRNA. This chain is Ribosomal RNA small subunit methyltransferase G, found in Chlorobium luteolum (strain DSM 273 / BCRC 81028 / 2530) (Pelodictyon luteolum).